A 460-amino-acid chain; its full sequence is ATP synthase subunit beta (460 aa).

150 to 157 (GGAGVGKT) serves as a coordination point for ATP.

The protein belongs to the ATPase alpha/beta chains family. In terms of assembly, F-type ATPases have 2 components, CF(1) - the catalytic core - and CF(0) - the membrane proton channel. CF(1) has five subunits: alpha(3), beta(3), gamma(1), delta(1), epsilon(1). CF(0) has three main subunits: a(1), b(2) and c(9-12). The alpha and beta chains form an alternating ring which encloses part of the gamma chain. CF(1) is attached to CF(0) by a central stalk formed by the gamma and epsilon chains, while a peripheral stalk is formed by the delta and b chains.

It is found in the cell inner membrane. It catalyses the reaction ATP + H2O + 4 H(+)(in) = ADP + phosphate + 5 H(+)(out). In terms of biological role, produces ATP from ADP in the presence of a proton gradient across the membrane. The catalytic sites are hosted primarily by the beta subunits. This Pectobacterium atrosepticum (strain SCRI 1043 / ATCC BAA-672) (Erwinia carotovora subsp. atroseptica) protein is ATP synthase subunit beta.